The following is a 107-amino-acid chain: Envelope small membrane protein (107 aa).

Residues 1-11 lie on the Virion surface side of the membrane; sequence MMNLVNKSLEE. The helical transmembrane segment at 12-32 threads the bilayer; the sequence is NGSFLTAVYIFCAFVALYLLG. Residues 33-107 are Intravirion-facing; sequence RALHAFVQAA…NFQNDGKLHS (75 aa).

It belongs to the gammacoronaviruses E protein family. In terms of assembly, homooligomer. Interacts with the M membrane protein in the budding compartment of the host cell, which is located between endoplasmic reticulum and the Golgi complex. The cytoplasmic tails of both proteins are important for this function. Interacts with Nucleoprotein.

The protein resides in the host Golgi apparatus membrane. Functionally, plays a central role in virus morphogenesis and assembly. Acts as a viroporin and self-assembles in host membranes forming pentameric protein-lipid pores that allow ion transport. Also plays a role in the induction of apoptosis. This is Envelope small membrane protein from Gallus gallus (Chicken).